The following is a 321-amino-acid chain: Transaldolase (321 aa).

Residue Lys-132 is the Schiff-base intermediate with substrate of the active site.

It belongs to the transaldolase family. Type 1 subfamily. Homodimer.

It localises to the cytoplasm. It catalyses the reaction D-sedoheptulose 7-phosphate + D-glyceraldehyde 3-phosphate = D-erythrose 4-phosphate + beta-D-fructose 6-phosphate. Its pathway is carbohydrate degradation; pentose phosphate pathway; D-glyceraldehyde 3-phosphate and beta-D-fructose 6-phosphate from D-ribose 5-phosphate and D-xylulose 5-phosphate (non-oxidative stage): step 2/3. Transaldolase is important for the balance of metabolites in the pentose-phosphate pathway. The polypeptide is Transaldolase (Rhizobium etli (strain CIAT 652)).